A 454-amino-acid polypeptide reads, in one-letter code: NEDD8-activating enzyme E1 catalytic subunit (454 aa).

Ala-2 carries the N-acetylalanine modification. 56 to 80 (GLGCELLKDLALSGFRNLEVIDMDR) contributes to the ATP binding site. The Glycyl thioester intermediate role is filled by Cys-215.

Belongs to the ubiquitin-activating E1 family. UBA3 subfamily. Heterodimer of UBA3/ECR1 and AXR1. Interacts with NEDD8 and RCE1. Expressed in shoot, root and floral meristems, in vascular tissues of cotyledons and mature leaves, and in the stele of the root.

Its subcellular location is the nucleus. It catalyses the reaction ATP + [NEDD8 protein] + [E1 NEDD8-activating enzyme]-L-cysteine = AMP + diphosphate + [E1 NEDD8-activating enzyme]-S-[NEDD8 protein]-yl-L-cysteine.. It functions in the pathway protein modification; protein neddylation. In terms of biological role, catalytic subunit of the dimeric ECR1-AXR1 E1 enzyme. E1 activates NEDD8/RUB1 by first adenylating its C-terminal glycine residue with ATP, thereafter linking this residue to the side chain of the catalytic cysteine, yielding a NEDD8-ECR1 thioester and free AMP. E1 finally transfers NEDD8 to the catalytic cysteine of RCE1. This chain is NEDD8-activating enzyme E1 catalytic subunit (ECR1), found in Arabidopsis thaliana (Mouse-ear cress).